The following is a 116-amino-acid chain: Large ribosomal subunit protein bL20 (116 aa).

This sequence belongs to the bacterial ribosomal protein bL20 family.

Functionally, binds directly to 23S ribosomal RNA and is necessary for the in vitro assembly process of the 50S ribosomal subunit. It is not involved in the protein synthesizing functions of that subunit. This chain is Large ribosomal subunit protein bL20, found in Mycoplasmopsis pulmonis (strain UAB CTIP) (Mycoplasma pulmonis).